We begin with the raw amino-acid sequence, 70 residues long: MMSKLGALLTICLLLFSLTAVPLDGDQHADQPAQRLQDRIPTEDHPLFDPNKRCCDDSECSYSCWPCCYG.

Positions 1–20 are cleaved as a signal peptide; that stretch reads MMSKLGALLTICLLLFSLTA. The propeptide occupies 21-53; that stretch reads VPLDGDQHADQPAQRLQDRIPTEDHPLFDPNKR. 3 cysteine pairs are disulfide-bonded: Cys54/Cys68, Cys55/Cys64, and Cys60/Cys67. 4-hydroxyproline is present on Pro66. Tyrosine amide is present on Tyr69.

Belongs to the conotoxin M superfamily. Expressed by the venom duct.

It localises to the secreted. This chain is Conotoxin TxMMSK-02, found in Conus textile (Cloth-of-gold cone).